A 951-amino-acid polypeptide reads, in one-letter code: Leucine-rich repeat-containing G-protein coupled receptor 4 (951 aa).

A signal peptide spans 1 to 24 (MPGPLRLLCFFALGLLGSAGPSGA). The LRRNT domain occupies 25 to 57 (APPLCAAPCSCDGDRRVDCSGKGLTAVPEGLSA). The Extracellular portion of the chain corresponds to 25-544 (APPLCAAPCS…LLGSWMIRLT (520 aa)). 2 cysteine pairs are disulfide-bonded: Cys-29-Cys-35 and Cys-33-Cys-43. LRR repeat units lie at residues 58 to 79 (FTQALDISMNNITQLPEDAFKN), 82 to 103 (FLEELQLAGNDLSFIHPKALSG), 106 to 127 (ELKVLTLQNNQLKTVPSEAIRG), 130 to 151 (ALQSLRLDANHITSVPEDSFEG), 154 to 177 (QLRHLWLDDNILTEVPVRPLSNLP), 178 to 199 (TLQALTLALNNISSIPDFAFTN), 202 to 223 (SLVVLHLHNNKIKSLSQHCFDG), 226 to 247 (NLETLDLNYNNLDEFPQAIKAL), 249 to 270 (SLKELGFHSNSISVIPDGAFAG), 273 to 294 (LLRTIHLYDNPLSFVGNSAFHN), 320 to 341 (HLESLTLTGTKISSIPDDLCQN), 344 to 365 (MLRTLDLSYNDIRDLPSFNGCR), 366 to 387 (ALEEISLQRNQISLIKETTFQG), 390 to 411 (SLRILDLSRNLIREIHSGAFAK), and 414 to 435 (TITNLDVSFNELTSFPTEGLNG). Residue Asn-68 is glycosylated (N-linked (GlcNAc...) asparagine). N-linked (GlcNAc...) asparagine glycosylation is found at Asn-188 and Asn-199. The N-linked (GlcNAc...) asparagine glycan is linked to Asn-294. Residues Cys-339 and Cys-364 are joined by a disulfide bond. 2 cysteine pairs are disulfide-bonded: Cys-470/Cys-522 and Cys-471/Cys-476. The tract at residues 487–512 (NSPQDHSVTKEKGATDAANATSTAES) is disordered. Low complexity predominate over residues 501–510 (TDAANATSTA). An N-linked (GlcNAc...) asparagine glycan is attached at Asn-505. A helical transmembrane segment spans residues 545-565 (VWFIFLVALLFNLLVILTVFA). At 566 to 575 (SCSSLPASKL) the chain is on the cytoplasmic side. The chain crosses the membrane as a helical span at residues 576 to 596 (FIGLISVSNLLMGIYTGILTF). Topologically, residues 597-619 (LDAVSWGRFAEFGIWWETGSGCK) are extracellular. A disulfide bond links Cys-618 and Cys-693. A helical transmembrane segment spans residues 620-640 (VAGSLAVFSSESAVFLLTLAA). Over 641 to 661 (VERSVFAKDVMKNGKSSHLRQ) the chain is Cytoplasmic. A helical membrane pass occupies residues 662–682 (FQVAALVALLGAAIAGCFPLF). At 683–703 (HGGQYSASPLCLPFPTGETPS) the chain is on the extracellular side. Residues 704-724 (LGFTVTLVLLNSLAFLLMAII) form a helical membrane-spanning segment. At 725-756 (YTKLYCNLEKEDPSENSQSSMIKHVAWLIFTN) the chain is on the cytoplasmic side. The chain crosses the membrane as a helical span at residues 757–777 (CIFFCPVAFFSFAPLITAISI). Over 778-783 (SPEIMK) the chain is Extracellular. A helical transmembrane segment spans residues 784–804 (SVTLIFFPLPACLNPVLYVFF). Topologically, residues 805-951 (NPKFKDDWKL…YAYNLPRVRD (147 aa)) are cytoplasmic. Ser-920 bears the Phosphoserine mark.

This sequence belongs to the G-protein coupled receptor 1 family.

The protein resides in the cell membrane. Receptor for R-spondins that potentiates the canonical Wnt signaling pathway and is involved in the formation of various organs. Upon binding to R-spondins (RSPO1, RSPO2, RSPO3 or RSPO4), associates with phosphorylated LRP6 and frizzled receptors that are activated by extracellular Wnt receptors, triggering the canonical Wnt signaling pathway to increase expression of target genes. In contrast to classical G-protein coupled receptors, does not activate heterotrimeric G-proteins to transduce the signal. Its function as activator of the Wnt signaling pathway is required for the development of various organs, including liver, kidney, intestine, bone, reproductive tract and eye. May also act as a receptor for norrin (NDP), such results however require additional confirmation in vivo. Required during spermatogenesis to activate the Wnt signaling pathway in peritubular myoid cells. Required for the maintenance of intestinal stem cells and Paneth cell differentiation in postnatal intestinal crypts. Acts as a regulator of bone formation and remodeling. Involved in kidney development; required for maintaining the ureteric bud in an undifferentiated state. Involved in the development of the anterior segment of the eye. Required during erythropoiesis. Also acts as a negative regulator of innate immunity by inhibiting TLR2/TLR4 associated pattern-recognition and pro-inflammatory cytokine production. Plays an important role in regulating the circadian rhythms of plasma lipids, partially through regulating the rhythmic expression of MTTP. Required for proper development of GnRH neurons (gonadotropin-releasing hormone expressing neurons) that control the release of reproductive hormones from the pituitary gland. The chain is Leucine-rich repeat-containing G-protein coupled receptor 4 (Lgr4) from Mus musculus (Mouse).